A 580-amino-acid chain; its full sequence is Alpha-thujene synthase, chloroplastic (580 aa).

Residues 1–32 (MALQLLTPSFSFQHSPSPHKLTTLRYTHHRIR) constitute a chloroplast transit peptide. Residues Arg-296, Asp-333, Asp-337, Arg-473, and Asp-476 each coordinate (2E)-geranyl diphosphate. Mg(2+) is bound by residues Asp-333 and Asp-337. The DDXXD motif motif lies at 333–337 (DDVYD). The Mg(2+) site is built by Asp-476, Thr-480, and Glu-484.

It belongs to the terpene synthase family. Tpsb subfamily. Monomer. The cofactor is Mg(2+). Requires Mn(2+) as cofactor. Expressed in developing and mature fruits. Barely detectable in leaves and shoots.

It is found in the plastid. Its subcellular location is the chloroplast. It catalyses the reaction (2E)-geranyl diphosphate = alpha-thujene + diphosphate. Its pathway is secondary metabolite biosynthesis; terpenoid biosynthesis. Functionally, monoterpene synthase (TPS) involved in the biosynthesis of monoterpene natural products used by traditional Chinese medicine to treat headache, inflammation and intoxication. Catalyzes the conversion of (2E)-geranyl diphosphate (GPP) into alpha-thujene. This is Alpha-thujene synthase, chloroplastic from Litsea cubeba (Aromatic litsea).